Here is a 224-residue protein sequence, read N- to C-terminus: MYPKINTIDTYISLRLFEVKPKYAGYSSVDARNKSFAIHDIKNYEKFSNAGLFYTSPTEITCYCCGMKFCNWLYEKHPLQVHGFWSRNCGFMRATLGIIGLKKMIDSYNDYFTHEVSVKHKNRVYTHKRLEDMGFSKCFMRFILANAFMPPYRKYIHKIILNERYFTFKFVAYLLSFHKVNLDNQTTYCMTCGIEQINKDENFCSACKTLNYKYYKMLNFSIKL.

Residues 29–92 (VDARNKSFAI…GFWSRNCGFM (64 aa)) form a BIR repeat. Positions 62, 65, 82, and 89 each coordinate Zn(2+). The segment at 189-207 (CMTCGIEQINKDENFCSAC) adopts a C4-type zinc-finger fold.

The protein belongs to the asfivirus IAP family. As to quaternary structure, interacts with subunit p17 of host CASP3.

Its subcellular location is the host cytoplasm. The protein localises to the virion. Functionally, prevents apoptosis of host cell by inhibiting caspase-3/CASP3 activation to promote the viral replication. Also induces the activation of host NF-kappaB. The polypeptide is Inhibitor of apoptosis protein (Ornithodoros (relapsing fever ticks)).